Consider the following 424-residue polypeptide: Chloroquine resistance transporter (424 aa).

At 1–58 the chain is on the cytoplasmic side; that stretch reads MKFASKKNNQKNSSKNDERYRELDNLVQEGNGSRLGGGSCLGKCAHVFKLIFKEIKDN. A helical membrane pass occupies residues 59–79; that stretch reads IFIYILSIIYLSVCVMNKIFA. Over 80 to 90 the chain is Vacuolar; it reads KRTLNKIGNYS. Asn-88 carries N-linked (GlcNAc...) asparagine glycosylation. A helical membrane pass occupies residues 91–111; sequence FVTSETHNFICMIMFFIVYSL. The Cytoplasmic portion of the chain corresponds to 112–127; it reads FGNKKGNSKERHRSFN. A helical transmembrane segment spans residues 128 to 148; the sequence is LQFFAISMLDACSVILAFIGL. The Vacuolar segment spans residues 149-154; it reads TRTTGN. A helical membrane pass occupies residues 155 to 175; it reads IQSFVLQLSIPINMFFCFLIL. Residues 176-178 lie on the Cytoplasmic side of the membrane; that stretch reads RYR. A helical transmembrane segment spans residues 179 to 199; the sequence is YHLYNYLGAVIIVVTIALVEM. Topologically, residues 200–209 are vacuolar; sequence KLSFETQEEN. A helical transmembrane segment spans residues 210 to 230; that stretch reads SIIFNLVLISALIPVCFSNMT. Residues 231–248 lie on the Cytoplasmic side of the membrane; it reads REIVFKKYKIDILRLNAM. A helical transmembrane segment spans residues 249-269; sequence VSFFQLFTSCLILPVYTLPFL. Over 270 to 317 the chain is Vacuolar; that stretch reads KQLHLPYNEIWTNIKNGFACLFLGRNTVVENCGLGMAKLCDDCDGAWK. Disulfide bonds link Cys-289–Cys-312 and Cys-301–Cys-309. The helical transmembrane segment at 318-338 threads the bilayer; sequence TFALFSFFNICDNLITSYIID. Over 339-346 the chain is Cytoplasmic; sequence KFSTMTYT. The helical transmembrane segment at 347 to 367 threads the bilayer; that stretch reads IVSCIQGPAIAIAYYFKFLAG. Topologically, residues 368-377 are vacuolar; it reads DVVREPRLLD. The helical transmembrane segment at 378–398 threads the bilayer; it reads FVTLFGYLFGSIIYRVGNIIL. Residues 399–424 are Cytoplasmic-facing; the sequence is ERKKMRNEENEDSEGELTNVDSIITQ.

It belongs to the CRT-like transporter family. As to quaternary structure, monomer.

The protein localises to the vacuole membrane. The catalysed reaction is L-arginine(in) = L-arginine(out). It catalyses the reaction L-lysine(in) = L-lysine(out). It carries out the reaction L-histidine(out) = L-histidine(in). The enzyme catalyses histamine(out) = histamine(in). The catalysed reaction is spermidine(in) = spermidine(out). It catalyses the reaction Fe(3+)(in) = Fe(3+)(out). It carries out the reaction Fe(2+)(in) = Fe(2+)(out). Its activity is regulated as follows. Transporter activity is trans-stimulated by host-derived peptides containing 4-11 amino acids. Trans-stimulation by hemoglobin-derived peptide VDPVNF is pH-dependent and sodium-independent. Saquinavir trans-stimulates transport of hemoglobin-derived peptide VDPVNF. Protons are non-competitive inhibitors of chloroquine transport. Functionally, nutrient transporter. Substrate transport is pH-dependent. Can transport arginine, lysine, histidine, peptides, histamine and spermidine. May modulate activity of endogenous transporters. Involved in maintaining the osmotic homeostasis of the digestive vacuole. Required for the asexual intraerythrocytic proliferation of parasites. Can transport Fe(2+) and Fe(3+). This is Chloroquine resistance transporter from Plasmodium falciparum.